The primary structure comprises 490 residues: Bifunctional protein HldE (490 aa).

The tract at residues M1–A330 is ribokinase. ATP is bound at residue N205–E208. The active site involves D275. The tract at residues F358 to S490 is cytidylyltransferase.

It in the N-terminal section; belongs to the carbohydrate kinase PfkB family. In the C-terminal section; belongs to the cytidylyltransferase family. In terms of assembly, homodimer.

The enzyme catalyses D-glycero-beta-D-manno-heptose 7-phosphate + ATP = D-glycero-beta-D-manno-heptose 1,7-bisphosphate + ADP + H(+). It catalyses the reaction D-glycero-beta-D-manno-heptose 1-phosphate + ATP + H(+) = ADP-D-glycero-beta-D-manno-heptose + diphosphate. Its pathway is nucleotide-sugar biosynthesis; ADP-L-glycero-beta-D-manno-heptose biosynthesis; ADP-L-glycero-beta-D-manno-heptose from D-glycero-beta-D-manno-heptose 7-phosphate: step 1/4. It functions in the pathway nucleotide-sugar biosynthesis; ADP-L-glycero-beta-D-manno-heptose biosynthesis; ADP-L-glycero-beta-D-manno-heptose from D-glycero-beta-D-manno-heptose 7-phosphate: step 3/4. In terms of biological role, catalyzes the phosphorylation of D-glycero-D-manno-heptose 7-phosphate at the C-1 position to selectively form D-glycero-beta-D-manno-heptose-1,7-bisphosphate. Its function is as follows. Catalyzes the ADP transfer from ATP to D-glycero-beta-D-manno-heptose 1-phosphate, yielding ADP-D-glycero-beta-D-manno-heptose. The sequence is that of Bifunctional protein HldE from Rhodopseudomonas palustris (strain HaA2).